The following is a 461-amino-acid chain: Probable protein phosphatase 2C 40 (461 aa).

Positions R34 to G63 are disordered. The PPM-type phosphatase domain maps to R57 to I321. The Mn(2+) site is built by D98, G99, D273, and D312. Positions K439–S453 are enriched in basic and acidic residues. The interval K439 to E461 is disordered.

This sequence belongs to the PP2C family. It depends on Mg(2+) as a cofactor. Requires Mn(2+) as cofactor. As to expression, expressed in leaves, leaf sheaths, panicles, nodes and internodes. Expressed at low levels in roots and stems.

It localises to the nucleus. It is found in the cytoplasm. The enzyme catalyses O-phospho-L-seryl-[protein] + H2O = L-seryl-[protein] + phosphate. It catalyses the reaction O-phospho-L-threonyl-[protein] + H2O = L-threonyl-[protein] + phosphate. Functionally, mediates the negative regulation of osmotic and salt stress tolerance through regulation of the jasmonate and abscisic acid signaling pathways and modulation of the raffinose family oligosaccharide metabolism pathway. This is Probable protein phosphatase 2C 40 from Oryza sativa subsp. japonica (Rice).